The chain runs to 374 residues: Dual-specificity RNA methyltransferase RlmN (374 aa).

Residue Glu-91 is the Proton acceptor of the active site. One can recognise a Radical SAM core domain in the interval 97–340 (EDDRGTLCVS…TTVRKTRGDD (244 aa)). The cysteines at positions 104 and 345 are disulfide-linked. The [4Fe-4S] cluster site is built by Cys-111, Cys-115, and Cys-118. S-adenosyl-L-methionine-binding positions include 166–167 (GE), Ser-198, 220–222 (SLH), and Asn-302. Cys-345 acts as the S-methylcysteine intermediate in catalysis.

It belongs to the radical SAM superfamily. RlmN family. [4Fe-4S] cluster serves as cofactor.

It localises to the cytoplasm. It carries out the reaction adenosine(2503) in 23S rRNA + 2 reduced [2Fe-2S]-[ferredoxin] + 2 S-adenosyl-L-methionine = 2-methyladenosine(2503) in 23S rRNA + 5'-deoxyadenosine + L-methionine + 2 oxidized [2Fe-2S]-[ferredoxin] + S-adenosyl-L-homocysteine. It catalyses the reaction adenosine(37) in tRNA + 2 reduced [2Fe-2S]-[ferredoxin] + 2 S-adenosyl-L-methionine = 2-methyladenosine(37) in tRNA + 5'-deoxyadenosine + L-methionine + 2 oxidized [2Fe-2S]-[ferredoxin] + S-adenosyl-L-homocysteine. Specifically methylates position 2 of adenine 2503 in 23S rRNA and position 2 of adenine 37 in tRNAs. m2A2503 modification seems to play a crucial role in the proofreading step occurring at the peptidyl transferase center and thus would serve to optimize ribosomal fidelity. In Delftia acidovorans (strain DSM 14801 / SPH-1), this protein is Dual-specificity RNA methyltransferase RlmN.